We begin with the raw amino-acid sequence, 126 residues long: MAILGLGTDIVEIARIEAVISRSGERLARRVLSDNEWAIWETHQQPVRFLAKRFAVKEAAAKAFGTGIRNGLAFNQFEVFNDELGKPRLRLWGEALTLAEKLGVAHMHVTLADERHYACATVILES.

Mg(2+) contacts are provided by D9 and E58.

The protein belongs to the P-Pant transferase superfamily. AcpS family. Requires Mg(2+) as cofactor.

The protein localises to the cytoplasm. The enzyme catalyses apo-[ACP] + CoA = holo-[ACP] + adenosine 3',5'-bisphosphate + H(+). In terms of biological role, transfers the 4'-phosphopantetheine moiety from coenzyme A to a Ser of acyl-carrier-protein. The polypeptide is Holo-[acyl-carrier-protein] synthase (Salmonella agona (strain SL483)).